The following is a 91-amino-acid chain: Small ribosomal subunit protein uS15c (91 aa).

The protein belongs to the universal ribosomal protein uS15 family. Part of the 30S ribosomal subunit.

Its subcellular location is the plastid. The protein localises to the chloroplast. This chain is Small ribosomal subunit protein uS15c (rps15), found in Cicer arietinum (Chickpea).